The primary structure comprises 685 residues: Methionine--tRNA ligase (685 aa).

The 'HIGH' region motif lies at proline 12–histidine 22. 4 residues coordinate Zn(2+): cysteine 143, cysteine 146, cysteine 156, and cysteine 159. A 'KMSKS' region motif is present at residues lysine 339–serine 343. Residue lysine 342 participates in ATP binding. Residues aspartate 582–glycine 685 form the tRNA-binding domain.

It belongs to the class-I aminoacyl-tRNA synthetase family. MetG type 1 subfamily. Homodimer. The cofactor is Zn(2+).

It is found in the cytoplasm. The catalysed reaction is tRNA(Met) + L-methionine + ATP = L-methionyl-tRNA(Met) + AMP + diphosphate. Is required not only for elongation of protein synthesis but also for the initiation of all mRNA translation through initiator tRNA(fMet) aminoacylation. The polypeptide is Methionine--tRNA ligase (Neisseria meningitidis serogroup A / serotype 4A (strain DSM 15465 / Z2491)).